The sequence spans 145 residues: Protein cornichon homolog 1 (145 aa).

3 helical membrane-spanning segments follow: residues 5–25 (FAAF…FFAI), 57–77 (IIHG…SILA), and 116–136 (LRIS…YLYA).

It belongs to the cornichon family. As to quaternary structure, interacts with glr-1. In terms of tissue distribution, widely expressed in the nervous system including in the AVA interneurons.

It localises to the endoplasmic reticulum membrane. The protein localises to the synapse. It is found in the cell projection. The protein resides in the dendrite. Functionally, negatively regulates export of glr-1 from the endoplasmic reticulum to synapses. This chain is Protein cornichon homolog 1, found in Caenorhabditis elegans.